A 319-amino-acid polypeptide reads, in one-letter code: Geranylgeranyl pyrophosphate synthase (319 aa).

3 residues coordinate isopentenyl diphosphate: Lys-42, Arg-45, and His-74. Positions 81 and 85 each coordinate Mg(2+). Arg-90 is a binding site for dimethylallyl diphosphate. Arg-91 contributes to the isopentenyl diphosphate binding site. Lys-172, Thr-173, Gln-210, Lys-226, and Lys-236 together coordinate dimethylallyl diphosphate.

This sequence belongs to the FPP/GGPP synthase family. As to quaternary structure, homodimer. Mg(2+) serves as cofactor.

The enzyme catalyses isopentenyl diphosphate + dimethylallyl diphosphate = (2E)-geranyl diphosphate + diphosphate. The catalysed reaction is isopentenyl diphosphate + (2E)-geranyl diphosphate = (2E,6E)-farnesyl diphosphate + diphosphate. It catalyses the reaction isopentenyl diphosphate + (2E,6E)-farnesyl diphosphate = (2E,6E,10E)-geranylgeranyl diphosphate + diphosphate. It participates in isoprenoid biosynthesis; geranyl diphosphate biosynthesis; geranyl diphosphate from dimethylallyl diphosphate and isopentenyl diphosphate: step 1/1. It functions in the pathway isoprenoid biosynthesis; farnesyl diphosphate biosynthesis; farnesyl diphosphate from geranyl diphosphate and isopentenyl diphosphate: step 1/1. Its pathway is isoprenoid biosynthesis; geranylgeranyl diphosphate biosynthesis; geranylgeranyl diphosphate from farnesyl diphosphate and isopentenyl diphosphate: step 1/1. Its function is as follows. Catalyzes the addition of 3 molecules of isopentenyl diphosphate (IPP) onto dimethylallyl diphosphate (DMAPP) to form geranylgeranyl pyrophosphate (GGPP). Catalyzes the synthesis of geranylgeranyl pyrophosphate as a major product and of farnesyl pyrophosphate in smaller amounts. The sequence is that of Geranylgeranyl pyrophosphate synthase from Geoglobus acetivorans.